The following is a 1702-amino-acid chain: Dicer-like protein 4 (1702 aa).

2 disordered regions span residues 1 to 52 (MRDE…SAAT) and 89 to 120 (SSSSVSSFSSSSSSLFSAAGTDDPSPKMEKDP). The segment covering 17–31 (GKRDREQKNCEEEKN) has biased composition (basic and acidic residues). Residues 89–105 (SSSSVSSFSSSSSSLFS) are compositionally biased toward low complexity. The Helicase ATP-binding domain maps to 131-307 (LCKKATEENV…SENLSKSINS (177 aa)). 144 to 151 (LGTGCGKT) serves as a coordination point for ATP. The short motif at 251-254 (DECH) is the DECH box element. Residues 475 to 629 (QLIKILSVFR…RMNLEITYRS (155 aa)) enclose the Helicase C-terminal domain. Residues 656 to 748 (SISLLYKYCS…LPDSKDEIED (93 aa)) form the Dicer dsRNA-binding fold domain. One can recognise a PAZ domain in the interval 932-1054 (LVEDIFPPSG…IPPELSHLKI (123 aa)). 2 RNase III domains span residues 1083 to 1251 (ELKH…VDSG) and 1292 to 1436 (LETL…LDCG). The Mg(2+) site is built by Glu1330, Asp1422, and Glu1425. DRBM domains are found at residues 1462-1528 (SPIK…NLKA) and 1621-1697 (TAKS…CLKH).

It belongs to the helicase family. Dicer subfamily. As to quaternary structure, interacts with DRB4. It depends on Mg(2+) as a cofactor. Requires Mn(2+) as cofactor.

The protein localises to the nucleus. Its function is as follows. Ribonuclease (RNase) III involved in RNA-mediated post-transcriptional gene silencing (PTGS). Functions in the biogenesis of trans-acting small interfering RNAs (ta-siRNAs, derived from the TAS1, TAS2 or TAS3 endogenous transcripts) by cleaving small dsRNAs into 21-24 nucleotide ta-siRNAs. Functions with the dsRNA-binding protein DRB4 in ta-siRNAs processing. Acts in the RDR6/SGS3/DCL4/AGO7 ta-siRNA pathway involved in leaf developmental timing. Plays a role in transitive silencing of transgenes by processing secondary siRNAs. This pathway, which requires DCL2 and RDR6, amplifies silencing by using the target RNA as substrate to generate secondary siRNAs, providing an efficient mechanism for long-distance silencing. Required for the production of the 30-40 nucleotide bacterial-induced long siRNAs (lsiRNA). May participate with DCL3 in the production of 24 nucleotide repeat-associated siRNAs (ra-siRNAs) which derive from heterochromatin and DNA repeats such as transposons. Plays an important role in antiviral RNA silencing. Involved in the production of viral siRNAs derived from the cucumber mosaic virus (CMV), turnip crinkle virus (TCV) and tobacco rattle virus (TRV). Targeted by the viral silencing suppressor (VSR) protein 2b of the cucumber mosaic virus (CMV) that inactivates DCL4 function in RNA silencing. Does not seem to be involved in microRNAs (miRNAs) processing. The protein is Dicer-like protein 4 (DCL4) of Arabidopsis thaliana (Mouse-ear cress).